The chain runs to 970 residues: uncharacterized protein (970 aa).

Residues 11–31 traverse the membrane as a helical segment; sequence WILKIGTILGLVCLGLFGVIF. The interval 366-387 is disordered; that stretch reads ASNSNDNNNQNNNNNNNSSDVI. Residues 367 to 387 are compositionally biased toward low complexity; it reads SNSNDNNNQNNNNNNNSSDVI. 11 helical membrane passes run 515 to 535, 537 to 557, 558 to 578, 614 to 634, 645 to 665, 726 to 746, 762 to 782, 789 to 809, 816 to 836, 877 to 897, and 903 to 923; these read FASS…LLTL, YKLL…SSLV, IFSA…FFVI, FFAN…VIYL, LMAI…IVLI, FLFV…LYLV, SNGI…YCLI, CLSY…VMYL, IDQS…FFAA, IESS…FGGI, and LVIF…AFLP.

The protein resides in the cell membrane. This is an uncharacterized protein from Mycoplasma genitalium (strain ATCC 33530 / DSM 19775 / NCTC 10195 / G37) (Mycoplasmoides genitalium).